The chain runs to 248 residues: Cutinase cut1 (248 aa).

An N-terminal signal peptide occupies residues 1 to 17 (MRSLSLFTALLAGQAFA). An intrachain disulfide couples Cys79 to Cys153. Ser164 serves as the catalytic Nucleophile. An intrachain disulfide couples Cys212 to Cys219. The active site involves Asp216. His229 functions as the Proton donor/acceptor in the catalytic mechanism.

Belongs to the cutinase family. In terms of processing, the 2 disulfide bonds play a critical role in holding the catalytic residues in juxta-position; reduction of the disulfide bridges results in the complete inactivation of the enzyme.

The protein resides in the secreted. The catalysed reaction is cutin + H2O = cutin monomers.. Functionally, catalyzes the hydrolysis of complex carboxylic polyesters found in the cell wall of plants. May degrade cutin, a macromolecule that forms the structure of the plant cuticle. May also degrade suberin, a specialized macromolecule found in the cell wall of various plant tissues. This Trichoderma harzianum (Hypocrea lixii) protein is Cutinase cut1.